The chain runs to 436 residues: MGQVLPLVTRQGDRIAIVSGLRTPFARQATAFHGIPAVDLGKMVVGELLARSEIPAEVIEQLVFGQVVQMPEAPNIAREIVLGTGMNVHTDAYSVSRACATSFQAVANVAESLMAGTIRAGIAGGADSSSVLPIGVSKKLARVLVDVNKARTMSQRLKLFSRLRLRDLMPVPPAVAEYSTGLRMGDTAEQMAKTYGITREQQDALAHRSHQRAAQAWSDGKLKEEVMTAFIPPYKQPLVEDNNIRGNSSLADYAKLRPAFDRKHGTVTAANSTPLTDGAAAVILMTESRAKELGLVPLGYLRSYAFTAIDVWQDMLLGPAWSTPLALERAGLTMSDLTLIDMHEAFAAQTLANIQLLGSERFAREALGRAHATGEVDDSKFNVLGGSIAYGHPFAATGARMITQTLHELRRRGGGFGLVTACAAGGLGAAMVLEAE.

Cys99 serves as the catalytic Acyl-thioester intermediate. Residues His392 and Cys422 each act as proton acceptor in the active site.

Belongs to the thiolase-like superfamily. Thiolase family. As to quaternary structure, heterotetramer of two alpha chains (FadJ) and two beta chains (FadI).

It localises to the cytoplasm. The enzyme catalyses an acyl-CoA + acetyl-CoA = a 3-oxoacyl-CoA + CoA. It participates in lipid metabolism; fatty acid beta-oxidation. Its function is as follows. Catalyzes the final step of fatty acid oxidation in which acetyl-CoA is released and the CoA ester of a fatty acid two carbons shorter is formed. In Escherichia coli (strain K12 / MC4100 / BW2952), this protein is 3-ketoacyl-CoA thiolase.